A 300-amino-acid chain; its full sequence is Putative S-adenosyl-L-methionine-dependent methyltransferase MAB_4328c (300 aa).

S-adenosyl-L-methionine is bound by residues aspartate 126 and aspartate 155–leucine 156.

This sequence belongs to the UPF0677 family.

Functionally, exhibits S-adenosyl-L-methionine-dependent methyltransferase activity. The sequence is that of Putative S-adenosyl-L-methionine-dependent methyltransferase MAB_4328c from Mycobacteroides abscessus (strain ATCC 19977 / DSM 44196 / CCUG 20993 / CIP 104536 / JCM 13569 / NCTC 13031 / TMC 1543 / L948) (Mycobacterium abscessus).